The following is a 353-amino-acid chain: Photosystem II protein D1 (353 aa).

Residue Thr2 is modified to N-acetylthreonine. Thr2 carries the post-translational modification Phosphothreonine. 3 helical membrane passes run 29-46, 118-133, and 142-156; these read YIGW…TATS, HFLL…EWEL, and WIAV…AATA. Position 118 (His118) interacts with chlorophyll a. Tyr126 lines the pheophytin a pocket. Residues Asp170 and Glu189 each contribute to the [CaMn4O5] cluster site. The chain crosses the membrane as a helical span at residues 197–218; the sequence is FHMLGVAGVFGGSLFSAMHGSL. His198 lines the chlorophyll a pocket. Residues His215 and 264 to 265 each bind a quinone; that span reads SF. Fe cation is bound at residue His215. His272 provides a ligand contact to Fe cation. Residues 274–288 form a helical membrane-spanning segment; it reads FLAAWPVVGIWFTAL. 4 residues coordinate [CaMn4O5] cluster: His332, Glu333, Asp342, and Ala344. Residues 345 to 353 constitute a propeptide that is removed on maturation; sequence ALEVPSLNG.

This sequence belongs to the reaction center PufL/M/PsbA/D family. PSII is composed of 1 copy each of membrane proteins PsbA, PsbB, PsbC, PsbD, PsbE, PsbF, PsbH, PsbI, PsbJ, PsbK, PsbL, PsbM, PsbT, PsbX, PsbY, PsbZ, Psb30/Ycf12, at least 3 peripheral proteins of the oxygen-evolving complex and a large number of cofactors. It forms dimeric complexes. The D1/D2 heterodimer binds P680, chlorophylls that are the primary electron donor of PSII, and subsequent electron acceptors. It shares a non-heme iron and each subunit binds pheophytin, quinone, additional chlorophylls, carotenoids and lipids. D1 provides most of the ligands for the Mn4-Ca-O5 cluster of the oxygen-evolving complex (OEC). There is also a Cl(-1) ion associated with D1 and D2, which is required for oxygen evolution. The PSII complex binds additional chlorophylls, carotenoids and specific lipids. is required as a cofactor. Post-translationally, tyr-161 forms a radical intermediate that is referred to as redox-active TyrZ, YZ or Y-Z. In terms of processing, C-terminally processed by CTPA; processing is essential to allow assembly of the oxygen-evolving complex and thus photosynthetic growth.

Its subcellular location is the plastid. The protein localises to the chloroplast thylakoid membrane. It catalyses the reaction 2 a plastoquinone + 4 hnu + 2 H2O = 2 a plastoquinol + O2. Its function is as follows. Photosystem II (PSII) is a light-driven water:plastoquinone oxidoreductase that uses light energy to abstract electrons from H(2)O, generating O(2) and a proton gradient subsequently used for ATP formation. It consists of a core antenna complex that captures photons, and an electron transfer chain that converts photonic excitation into a charge separation. The D1/D2 (PsbA/PsbD) reaction center heterodimer binds P680, the primary electron donor of PSII as well as several subsequent electron acceptors. This is Photosystem II protein D1 from Lolium perenne (Perennial ryegrass).